The sequence spans 475 residues: MAASALRGLPVAGGGESSESEDDGWEIGYLDRTSQKLKRLLPIEEKKEKFKKAMTIGDVSLVQELLDSGISVDSNFQYGWTPLMYAASVANAELVRVLLDRGANASFEKDKQSILITACSAHGSEEQILKCVELLLSRNADPNVACRRLMTPIMYAARDGHTQVVALLVAHGAEVNTQDENGYTALTWAARQGHKNIVLKLLELGANKMLQTKDGKMPSEIAKRNKHHEIFNLLSFTLNPLEGKLQQLTKEDTICKILTTDSDREKDHIFSSYTAFGDLEVFLHGLGLEHMTDLLKERDITLRHLLTMREDEFTKNGITSKDQQKILAALKELQVEEIQFGELSEETKLEISGDEFLNFLLKLNKQCGHLITAVQNVITELPVNSQKITLEWASPQNFTSVCEELVNNVEDLSEKVCKLKDLIQKLQNERENDPTHIQLREEVSTWNSRILKRTAITICGFGFLLFICKLTFQRK.

The tract at residues 1 to 25 is disordered; the sequence is MAASALRGLPVAGGGESSESEDDGW. Phosphoserine occurs at positions 17, 18, and 20. ANK repeat units follow at residues 45–74, 78–107, 110–144, 148–177, 181–210, and 214–243; these read EKKE…SVDS, YGWT…NASF, DKQS…DPNV, RLMT…EVNT, NGYT…NKML, and DGKM…PLEG. Residues 272–334 enclose the SAM domain; it reads SYTAFGDLEV…KILAALKELQ (63 aa).

As to quaternary structure, interacts with DDX4, PIWIL1, RANBP9 and TDRD1. As to expression, expressed exclusively in the testis and ovary and at higher levels in the adult testis compared with the adult ovary.

It localises to the cytoplasm. In terms of biological role, plays a central role during spermatogenesis by repressing transposable elements and preventing their mobilization, which is essential for the germline integrity. Acts via the piRNA metabolic process, which mediates the repression of transposable elements during meiosis by forming complexes composed of piRNAs and Piwi proteins and governs the methylation and subsequent repression of transposons. Its association with pi-bodies suggests a participation in the primary piRNAs metabolic process. Required prior to the pachytene stage to facilitate the production of multiple types of piRNAs, including those associated with repeats involved in the regulation of retrotransposons. May act by mediating protein-protein interactions during germ cell maturation. This is Ankyrin repeat, SAM and basic leucine zipper domain-containing protein 1 from Homo sapiens (Human).